The following is a 257-amino-acid chain: Hydroxyacylglutathione hydrolase (257 aa).

The Zn(2+) site is built by His54, His56, Asp58, His59, His113, Asp137, and His175.

Belongs to the metallo-beta-lactamase superfamily. Glyoxalase II family. Monomer. Zn(2+) serves as cofactor.

The enzyme catalyses an S-(2-hydroxyacyl)glutathione + H2O = a 2-hydroxy carboxylate + glutathione + H(+). The protein operates within secondary metabolite metabolism; methylglyoxal degradation; (R)-lactate from methylglyoxal: step 2/2. Functionally, thiolesterase that catalyzes the hydrolysis of S-D-lactoyl-glutathione to form glutathione and D-lactic acid. This is Hydroxyacylglutathione hydrolase from Nostoc sp. (strain PCC 7120 / SAG 25.82 / UTEX 2576).